The sequence spans 201 residues: Large ribosomal subunit protein uL4 (201 aa).

Residues 44-71 form a disordered region; that stretch reads RAQKTRAEVSGSGKKPWRQKGTGRARSG.

It belongs to the universal ribosomal protein uL4 family. As to quaternary structure, part of the 50S ribosomal subunit.

Its function is as follows. One of the primary rRNA binding proteins, this protein initially binds near the 5'-end of the 23S rRNA. It is important during the early stages of 50S assembly. It makes multiple contacts with different domains of the 23S rRNA in the assembled 50S subunit and ribosome. Forms part of the polypeptide exit tunnel. The polypeptide is Large ribosomal subunit protein uL4 (Actinobacillus succinogenes (strain ATCC 55618 / DSM 22257 / CCUG 43843 / 130Z)).